The chain runs to 169 residues: Large ribosomal subunit protein uL10 (169 aa).

This sequence belongs to the universal ribosomal protein uL10 family. Part of the ribosomal stalk of the 50S ribosomal subunit. The N-terminus interacts with L11 and the large rRNA to form the base of the stalk. The C-terminus forms an elongated spine to which L12 dimers bind in a sequential fashion forming a multimeric L10(L12)X complex.

Functionally, forms part of the ribosomal stalk, playing a central role in the interaction of the ribosome with GTP-bound translation factors. The protein is Large ribosomal subunit protein uL10 of Rickettsia akari (strain Hartford).